A 187-amino-acid polypeptide reads, in one-letter code: Putative lipoprotein LppJ (187 aa).

The signal sequence occupies residues 1-28 (MPHSTADRRLRLTRQALLAAAVAPLLAG). A lipid anchor (N-palmitoyl cysteine) is attached at Cys-29. Residue Cys-29 is the site of S-diacylglycerol cysteine attachment.

It localises to the cell membrane. The protein is Putative lipoprotein LppJ (lppJ) of Mycobacterium bovis (strain ATCC BAA-935 / AF2122/97).